The chain runs to 299 residues: Large ribosomal subunit protein eL22 (299 aa).

Disordered stretches follow at residues 1–142 (MAPT…AAPA) and 155–178 (VAKP…KKNV). 2 stretches are compositionally biased toward basic and acidic residues: residues 33 to 42 (GKVEKPKAEA) and 55 to 64 (KASEAAKDVK). Composition is skewed to low complexity over residues 65-98 (AAAA…AAAA) and 105-142 (AAAA…AAPA).

It belongs to the eukaryotic ribosomal protein eL22 family.

This chain is Large ribosomal subunit protein eL22 (RpL22), found in Drosophila melanogaster (Fruit fly).